The following is a 470-amino-acid chain: MSQNFGKISQVIGAVIDVEFEPGKLPPIYNALRVTNPAIDDKEYNLVLEVAQHLGENAVRTIAMDSTDGLVRGQAVLDTGKQISVPVGRKTLGRILNVIGEPVDEMGPVNAEKEYGIHREAPAFVDQSTKVEAFTTGIKVVDLLAPYARGGKIGLFGGAGVGKTVLIMELINNIAKQHGGFSVFAGVGERTREGNDLWMEMKESGVLDKAALVYGQMNEPPGARARVALSALSIAEYFRDEEGQNVLLFVDNIFRFTQAGSEVSALLGRIPSAVGYQPTLATEMGELQERITSTTKGSITSVQAIYVPADDLTDPAPATAFAHLDATTVLSRQIAELGIYPAVDPLDSTSRILDPQVIGEEHYSIARQVQYVLQKYKDLQDIIAILGMDELSEEDKLVVARARKIQRFLSQPFHVAEAFTGSPGKYVELKDTIKGFQEIVAGKHDDVPEQAFYMVGTIEEALEKAKKLAA.

157-164 (GGAGVGKT) is an ATP binding site.

Belongs to the ATPase alpha/beta chains family. F-type ATPases have 2 components, CF(1) - the catalytic core - and CF(0) - the membrane proton channel. CF(1) has five subunits: alpha(3), beta(3), gamma(1), delta(1), epsilon(1). CF(0) has three main subunits: a(1), b(2) and c(9-12). The alpha and beta chains form an alternating ring which encloses part of the gamma chain. CF(1) is attached to CF(0) by a central stalk formed by the gamma and epsilon chains, while a peripheral stalk is formed by the delta and b chains.

Its subcellular location is the cell inner membrane. It catalyses the reaction ATP + H2O + 4 H(+)(in) = ADP + phosphate + 5 H(+)(out). Its function is as follows. Produces ATP from ADP in the presence of a proton gradient across the membrane. The catalytic sites are hosted primarily by the beta subunits. The sequence is that of ATP synthase subunit beta from Geobacter sulfurreducens (strain ATCC 51573 / DSM 12127 / PCA).